The chain runs to 324 residues: Glyoxylate/hydroxypyruvate reductase B (324 aa).

Active-site residues include arginine 237 and glutamate 266. Catalysis depends on histidine 285, which acts as the Proton donor.

The protein belongs to the D-isomer specific 2-hydroxyacid dehydrogenase family. GhrB subfamily. In terms of assembly, homodimer.

It is found in the cytoplasm. It catalyses the reaction glycolate + NADP(+) = glyoxylate + NADPH + H(+). The catalysed reaction is (R)-glycerate + NAD(+) = 3-hydroxypyruvate + NADH + H(+). It carries out the reaction (R)-glycerate + NADP(+) = 3-hydroxypyruvate + NADPH + H(+). In terms of biological role, catalyzes the NADPH-dependent reduction of glyoxylate and hydroxypyruvate into glycolate and glycerate, respectively. In Escherichia coli O6:H1 (strain CFT073 / ATCC 700928 / UPEC), this protein is Glyoxylate/hydroxypyruvate reductase B.